Consider the following 622-residue polypeptide: 1,4-alpha-glucan branching enzyme GlgB (622 aa).

The active-site Nucleophile is the D300. Catalysis depends on E351, which acts as the Proton donor.

The protein belongs to the glycosyl hydrolase 13 family. GlgB subfamily. Monomer.

It catalyses the reaction Transfers a segment of a (1-&gt;4)-alpha-D-glucan chain to a primary hydroxy group in a similar glucan chain.. The protein operates within glycan biosynthesis; glycogen biosynthesis. Catalyzes the formation of the alpha-1,6-glucosidic linkages in glycogen by scission of a 1,4-alpha-linked oligosaccharide from growing alpha-1,4-glucan chains and the subsequent attachment of the oligosaccharide to the alpha-1,6 position. The sequence is that of 1,4-alpha-glucan branching enzyme GlgB from Streptococcus agalactiae serotype V (strain ATCC BAA-611 / 2603 V/R).